The following is a 75-amino-acid chain: Tautomerase PptA (75 aa).

The active-site Proton acceptor; via imino nitrogen is the proline 2.

This sequence belongs to the 4-oxalocrotonate tautomerase family. PptA subfamily. In terms of assembly, homodimer.

The protein resides in the cytoplasm. This chain is Tautomerase PptA, found in Escherichia coli O139:H28 (strain E24377A / ETEC).